The following is a 417-amino-acid chain: Gamma-glutamyl phosphate reductase (417 aa).

The protein belongs to the gamma-glutamyl phosphate reductase family.

It localises to the cytoplasm. It carries out the reaction L-glutamate 5-semialdehyde + phosphate + NADP(+) = L-glutamyl 5-phosphate + NADPH + H(+). It functions in the pathway amino-acid biosynthesis; L-proline biosynthesis; L-glutamate 5-semialdehyde from L-glutamate: step 2/2. Functionally, catalyzes the NADPH-dependent reduction of L-glutamate 5-phosphate into L-glutamate 5-semialdehyde and phosphate. The product spontaneously undergoes cyclization to form 1-pyrroline-5-carboxylate. This Escherichia coli O81 (strain ED1a) protein is Gamma-glutamyl phosphate reductase.